A 947-amino-acid chain; its full sequence is Protocadherin alpha-4 (947 aa).

Positions 1–29 (MEFSWGSGQESRRLLLLLLLLSAWEAGNG) are cleaved as a signal peptide. Cadherin domains follow at residues 30-133 (QLHY…PPVF), 134-242 (PATQ…APAF), 243-350 (DRTI…VPDL), 351-455 (EFKS…APAF), 456-565 (AQPE…APAL), and 588-678 (DHVV…APKA). At 30 to 697 (QLHYSVSEEA…GPDAALVDVN (668 aa)) the chain is on the extracellular side. A disulfide bond links C96 and C102. Residues N139, N257, and N265 are each glycosylated (N-linked (GlcNAc...) asparagine). N-linked (GlcNAc...) asparagine glycosylation occurs at N548. Residues 698–718 (VYLIIAICAVSSLLVLTLLLY) traverse the membrane as a helical segment. At 719–947 (TALRCSAPPT…GNSTTDNSDQ (229 aa)) the chain is on the cytoplasmic side. PXXP repeat units follow at residues 734–737 (PGKP), 774–777 (PSLP), 796–799 (PRQP), 829–832 (PGGP), 870–873 (PGNP), and 888–891 (PGSP). The interval 734 to 891 (PGKPTLVCSS…PDKFIIPGSP (158 aa)) is 6 X 4 AA repeats of P-X-X-P. Positions 738-947 (TLVCSSAVGS…GNSTTDNSDQ (210 aa)) are required for interaction with FYN. Disordered stretches follow at residues 754–805 (RRPR…DWRY) and 828–853 (GPGGPDQQWPTVSSATPEPEAGEVSP). Positions 892–947 (AIISIRQEPANSQIDKSDFITFGKKEETKKKKKKKKGNKTQEKKEKGNSTTDNSDQ) are disordered. Basic and acidic residues predominate over residues 906–920 (DKSDFITFGKKEETK).

In terms of assembly, forms homodimers in trans (molecules expressed by two different cells). Forms promiscuous heterodimers in cis (at the plasma membrane of the same cell) with other protocadherins. Interacts with FYN.

The protein resides in the cell membrane. Its function is as follows. Calcium-dependent cell-adhesion protein involved in cells self-recognition and non-self discrimination. Thereby, it is involved in the establishment and maintenance of specific neuronal connections in the brain. This chain is Protocadherin alpha-4, found in Pan troglodytes (Chimpanzee).